The primary structure comprises 247 residues: ATP synthase subunit a, chloroplastic (247 aa).

The next 5 membrane-spanning stretches (helical) occupy residues 38-58 (QVLI…IVTV), 95-115 (VPFI…GALL), 134-154 (INTT…AGLS), 199-219 (LVVV…VMFL), and 220-240 (GLFT…AYIG).

It belongs to the ATPase A chain family. F-type ATPases have 2 components, CF(1) - the catalytic core - and CF(0) - the membrane proton channel. CF(1) has five subunits: alpha(3), beta(3), gamma(1), delta(1), epsilon(1). CF(0) has four main subunits: a, b, b' and c.

The protein localises to the plastid. It localises to the chloroplast thylakoid membrane. In terms of biological role, key component of the proton channel; it plays a direct role in the translocation of protons across the membrane. The sequence is that of ATP synthase subunit a, chloroplastic from Populus trichocarpa (Western balsam poplar).